Here is a 321-residue protein sequence, read N- to C-terminus: Annexin A5 (321 aa).

Residue alanine 2 is modified to N-acetylalanine. Annexin repeat units follow at residues 15 to 86, 87 to 158, 170 to 242, and 246 to 317; these read FDER…ALMK, PSRL…VLLQ, AQVE…AVVK, and SIPA…LLCG. Residue lysine 29 forms a Glycyl lysine isopeptide (Lys-Gly) (interchain with G-Cter in SUMO1); alternate linkage. Residue lysine 29 forms a Glycyl lysine isopeptide (Lys-Gly) (interchain with G-Cter in SUMO2); alternate linkage. 5 positions are modified to N6-acetyllysine: lysine 70, lysine 76, lysine 79, lysine 97, and lysine 101. Lysine 290 is modified (N6-succinyllysine). The [IL]-x-C-x-x-[DE] motif motif lies at 314–320; it reads LLCGGED.

It belongs to the annexin family. As to quaternary structure, monomer. Binds ATRX and EIF5B. S-nitrosylation is induced by interferon-gamma and oxidatively-modified low-densitity lipoprotein (LDL(ox)) possibly implicating the iNOS-S100A8/9 transnitrosylase complex.

This protein is an anticoagulant protein that acts as an indirect inhibitor of the thromboplastin-specific complex, which is involved in the blood coagulation cascade. This Bos taurus (Bovine) protein is Annexin A5 (ANXA5).